We begin with the raw amino-acid sequence, 447 residues long: Rab GDP dissociation inhibitor alpha (447 aa).

Belongs to the Rab GDI family. Interacts with RHOH. Interacts with the non-phosphorylated forms of RAB1A, RAB3A, RAB5A, RAB5B, RAB5C, RAB8A, RAB8B, RAB10, RAB12, RAB35, and RAB43.

It localises to the cytoplasm. Its subcellular location is the golgi apparatus. It is found in the trans-Golgi network. Regulates the GDP/GTP exchange reaction of most Rab proteins by inhibiting the dissociation of GDP from them, and the subsequent binding of GTP to them. Promotes the dissociation of GDP-bound Rab proteins from the membrane and inhibits their activation. Promotes the dissociation of RAB1A, RAB3A, RAB5A and RAB10 from membranes. This is Rab GDP dissociation inhibitor alpha (GDI1) from Pongo pygmaeus (Bornean orangutan).